Consider the following 231-residue polypeptide: Lipoprotein-releasing system ATP-binding protein LolD (231 aa).

The ABC transporter domain occupies 6 to 231 (LQVQAVSKSY…YLQAVAEHAQ (226 aa)). An ATP-binding site is contributed by 42-49 (GTSGSGKS).

This sequence belongs to the ABC transporter superfamily. Lipoprotein translocase (TC 3.A.1.125) family. In terms of assembly, the complex is composed of two ATP-binding proteins (LolD) and two transmembrane proteins (LolC and LolE).

The protein resides in the cell inner membrane. Part of the ABC transporter complex LolCDE involved in the translocation of mature outer membrane-directed lipoproteins, from the inner membrane to the periplasmic chaperone, LolA. Responsible for the formation of the LolA-lipoprotein complex in an ATP-dependent manner. The polypeptide is Lipoprotein-releasing system ATP-binding protein LolD (Shewanella sp. (strain MR-4)).